The following is a 297-amino-acid chain: tRNA uridine(34) hydroxylase (297 aa).

In terms of domain architecture, Rhodanese spans 137-232 (RGDDVVFFDG…YGEKYGDKGL (96 aa)). Cysteine 192 functions as the Cysteine persulfide intermediate in the catalytic mechanism.

Belongs to the TrhO family.

The enzyme catalyses uridine(34) in tRNA + AH2 + O2 = 5-hydroxyuridine(34) in tRNA + A + H2O. Catalyzes oxygen-dependent 5-hydroxyuridine (ho5U) modification at position 34 in tRNAs. This chain is tRNA uridine(34) hydroxylase, found in Corynebacterium urealyticum (strain ATCC 43042 / DSM 7109).